Consider the following 295-residue polypeptide: ATP synthase gamma chain (295 aa).

Belongs to the ATPase gamma chain family. In terms of assembly, F-type ATPases have 2 components, CF(1) - the catalytic core - and CF(0) - the membrane proton channel. CF(1) has five subunits: alpha(3), beta(3), gamma(1), delta(1), epsilon(1). CF(0) has three main subunits: a, b and c.

It localises to the cell membrane. Functionally, produces ATP from ADP in the presence of a proton gradient across the membrane. The gamma chain is believed to be important in regulating ATPase activity and the flow of protons through the CF(0) complex. The sequence is that of ATP synthase gamma chain from Caldanaerobacter subterraneus subsp. tengcongensis (strain DSM 15242 / JCM 11007 / NBRC 100824 / MB4) (Thermoanaerobacter tengcongensis).